A 124-amino-acid chain; its full sequence is Alkaline proteinase inhibitor (124 aa).

An N-terminal signal peptide occupies residues 1–24 (MKGTLTRAALAAGGMMVTSAVMAG). An intrachain disulfide couples C47 to C70.

This sequence belongs to the protease inhibitor I38 family. In terms of assembly, monomer.

The protein localises to the periplasm. In terms of biological role, inhibitor of the alkaline protease. Inhibits SMP by formation of a non-covalent complex with a molar ratio of 1:1 and shows a high specificity. The sequence is that of Alkaline proteinase inhibitor (inh) from Serratia marcescens.